The primary structure comprises 179 residues: Large ribosomal subunit protein uL5 (179 aa).

The protein belongs to the universal ribosomal protein uL5 family. Part of the 50S ribosomal subunit; part of the 5S rRNA/L5/L18/L25 subcomplex. Contacts the 5S rRNA and the P site tRNA. Forms a bridge to the 30S subunit in the 70S ribosome.

In terms of biological role, this is one of the proteins that bind and probably mediate the attachment of the 5S RNA into the large ribosomal subunit, where it forms part of the central protuberance. In the 70S ribosome it contacts protein S13 of the 30S subunit (bridge B1b), connecting the 2 subunits; this bridge is implicated in subunit movement. Contacts the P site tRNA; the 5S rRNA and some of its associated proteins might help stabilize positioning of ribosome-bound tRNAs. The polypeptide is Large ribosomal subunit protein uL5 (Alkaliphilus oremlandii (strain OhILAs) (Clostridium oremlandii (strain OhILAs))).